A 77-amino-acid chain; its full sequence is Cysteine-rich protein 1 (77 aa).

The region spanning 2-63 (PKCPKCSKEV…HPCYAAMFGP (62 aa)) is the LIM zinc-binding domain. N6-acetyllysine is present on residues K9 and K22. The residue at position 68 (R68) is an Omega-N-methylarginine.

Seems to have a role in zinc absorption and may function as an intracellular zinc transport protein. The chain is Cysteine-rich protein 1 (CRIP1) from Bos taurus (Bovine).